The primary structure comprises 328 residues: Phosphate acyltransferase (328 aa).

The protein belongs to the PlsX family. Homodimer. Probably interacts with PlsY.

It localises to the cytoplasm. It catalyses the reaction a fatty acyl-[ACP] + phosphate = an acyl phosphate + holo-[ACP]. The protein operates within lipid metabolism; phospholipid metabolism. In terms of biological role, catalyzes the reversible formation of acyl-phosphate (acyl-PO(4)) from acyl-[acyl-carrier-protein] (acyl-ACP). This enzyme utilizes acyl-ACP as fatty acyl donor, but not acyl-CoA. In Staphylococcus aureus (strain MRSA252), this protein is Phosphate acyltransferase.